The sequence spans 147 residues: Small ribosomal subunit protein uS12 (147 aa).

The segment at 1-22 (MPTINQLVRKPRKSKIEKSDSP) is disordered. Position 102 is a 3-methylthioaspartic acid (Asp102).

The protein belongs to the universal ribosomal protein uS12 family. In terms of assembly, part of the 30S ribosomal subunit. Contacts proteins S8 and S17. May interact with IF1 in the 30S initiation complex.

In terms of biological role, with S4 and S5 plays an important role in translational accuracy. Interacts with and stabilizes bases of the 16S rRNA that are involved in tRNA selection in the A site and with the mRNA backbone. Located at the interface of the 30S and 50S subunits, it traverses the body of the 30S subunit contacting proteins on the other side and probably holding the rRNA structure together. The combined cluster of proteins S8, S12 and S17 appears to hold together the shoulder and platform of the 30S subunit. The protein is Small ribosomal subunit protein uS12 of Streptococcus pyogenes serotype M12 (strain MGAS2096).